A 476-amino-acid chain; its full sequence is Ribulose bisphosphate carboxylase large chain (476 aa).

The propeptide occupies 1-2 (MS). An N-acetylproline modification is found at Pro3. Position 14 is an N6,N6,N6-trimethyllysine (Lys14). Residues Asn123 and Thr173 each coordinate substrate. The active-site Proton acceptor is the Lys175. Lys177 provides a ligand contact to substrate. Mg(2+) is bound by residues Lys201, Asp203, and Glu204. Lys201 carries the post-translational modification N6-carboxylysine. The active-site Proton acceptor is His294. Positions 295, 327, and 379 each coordinate substrate.

Belongs to the RuBisCO large chain family. Type I subfamily. Heterohexadecamer of 8 large chains and 8 small chains; disulfide-linked. The disulfide link is formed within the large subunit homodimers. The cofactor is Mg(2+). In terms of processing, the disulfide bond which can form in the large chain dimeric partners within the hexadecamer appears to be associated with oxidative stress and protein turnover.

Its subcellular location is the plastid. The protein resides in the chloroplast. The enzyme catalyses 2 (2R)-3-phosphoglycerate + 2 H(+) = D-ribulose 1,5-bisphosphate + CO2 + H2O. The catalysed reaction is D-ribulose 1,5-bisphosphate + O2 = 2-phosphoglycolate + (2R)-3-phosphoglycerate + 2 H(+). Its function is as follows. RuBisCO catalyzes two reactions: the carboxylation of D-ribulose 1,5-bisphosphate, the primary event in carbon dioxide fixation, as well as the oxidative fragmentation of the pentose substrate in the photorespiration process. Both reactions occur simultaneously and in competition at the same active site. The sequence is that of Ribulose bisphosphate carboxylase large chain from Sorghum bicolor (Sorghum).